Reading from the N-terminus, the 1450-residue chain is Phospholipase B1, membrane-associated (1450 aa).

Positions 1 to 27 (MESWPGVSLVGLLLLLLLGQGPSQIHG) are cleaved as a signal peptide. Residues 28 to 1422 (SSGENTSQPQ…KAKENSNTLY (1395 aa)) lie on the Extracellular side of the membrane. Residues asparagine 32, asparagine 45, and asparagine 179 are each glycosylated (N-linked (GlcNAc...) asparagine). A run of 3 repeats spans residues 41–351 (RTLK…YRNS), 366–711 (MKEG…TKNS), and 712–1058 (NLGH…FRNS). Residues 41–1407 (RTLKNFSFPC…NPFLYTVRNS (1367 aa)) form a 4 X 308-326 AA approximate repeats region. Active-site residues include serine 404, aspartate 518, and histidine 659. A glycan (N-linked (GlcNAc...) asparagine) is linked at asparagine 699. The segment covering 708-720 (TKNSNLGHGTSMS) has biased composition (polar residues). The segment at 708-734 (TKNSNLGHGTSMSCEEKAPSASPPTSV) is disordered. Residues asparagine 787, asparagine 801, asparagine 844, asparagine 880, asparagine 926, asparagine 1059, asparagine 1226, asparagine 1280, asparagine 1383, and asparagine 1387 are each glycosylated (N-linked (GlcNAc...) asparagine). Repeat unit 4 spans residues 1068–1407 (IENWGSDFLC…NPFLYTVRNS (340 aa)). A necessary for membrane localization region spans residues 1408-1450 (QILLDKAKENSNTLYWAVPVAAVGGLVVGILGMMLWRTVRLVQ). A helical membrane pass occupies residues 1423–1443 (WAVPVAAVGGLVVGILGMMLW). Topologically, residues 1444–1450 (RTVRLVQ) are cytoplasmic.

It belongs to the 'GDSL' lipolytic enzyme family. Phospholipase B1 subfamily. Post-translationally, undergoes proteolytic cleavage in the ileum. Expressed in the ileum mucosa, Paneth cells spermatocytes, spermatids and sperm (at protein level). Expressed in the ileum, jejunum, esophagus and testis.

The protein resides in the apical cell membrane. It catalyses the reaction a 1,2-diacyl-sn-glycero-3-phosphocholine + H2O = a 1-acyl-sn-glycero-3-phosphocholine + a fatty acid + H(+). It carries out the reaction a 1-O-alkyl-2-acyl-sn-glycero-3-phosphocholine + H2O = a 1-O-alkyl-sn-glycero-3-phosphocholine + a fatty acid + H(+). The catalysed reaction is a 1-acyl-sn-glycero-3-phosphocholine + H2O = sn-glycerol 3-phosphocholine + a fatty acid + H(+). The enzyme catalyses a triacylglycerol + H2O = a diacylglycerol + a fatty acid + H(+). It catalyses the reaction 1,2-dihexadecanoyl-sn-glycero-3-phosphocholine + H2O = 1-hexadecanoyl-sn-glycero-3-phosphocholine + hexadecanoate + H(+). It carries out the reaction 1-hexadecanoyl-2-(9Z-octadecenoyl)-sn-glycero-3-phosphocholine + H2O = 1-hexadecanoyl-sn-glycero-3-phosphocholine + (9Z)-octadecenoate + H(+). The catalysed reaction is 1,2-di-(9Z-octadecenoyl)-sn-glycero-3-phosphocholine + H2O = 1-(9Z-octadecenoyl)-sn-glycero-3-phosphocholine + (9Z)-octadecenoate + H(+). The enzyme catalyses 1-hexadecanoyl-2-(9Z,12Z-octadecadienoyl)-sn-glycero-3-phosphocholine + H2O = (9Z,12Z)-octadecadienoate + 1-hexadecanoyl-sn-glycero-3-phosphocholine + H(+). It catalyses the reaction 1-hexadecanoyl-2-(9Z,12Z-octadecadienoyl)-sn-glycero-3-phosphocholine + H2O = 2-(9Z,12Z-octadecadienoyl)-sn-glycero-3-phosphocholine + hexadecanoate + H(+). It carries out the reaction 1-hexadecanoyl-2-(9Z-octadecenoyl)-sn-glycero-3-phosphoethanolamine + H2O = 1-hexadecanoyl-sn-glycero-3-phosphoethanolamine + (9Z)-octadecenoate + H(+). The catalysed reaction is 1-hexadecanoyl-2-(9Z-octadecenoyl)-sn-glycero-3-phospho-(1'-sn-glycerol) + H2O = 1-hexadecanoyl-sn-glycero-3-phospho-(1'-sn-glycerol) + (9Z)-octadecenoate + H(+). The enzyme catalyses 1,2-dihexadecanoyl-sn-glycero-3-phosphocholine + 2 H2O = sn-glycerol 3-phosphocholine + 2 hexadecanoate + 2 H(+). It catalyses the reaction 1-O-hexadecyl-2-(9Z)-octadecenoyl-sn-glycero-3-phosphocholine + H2O = 1-O-hexadecyl-sn-glycero-3-phosphocholine + (9Z)-octadecenoate + H(+). It carries out the reaction 1-hexadecanoyl-sn-glycero-3-phosphocholine + H2O = sn-glycerol 3-phosphocholine + hexadecanoate + H(+). The catalysed reaction is 1,2,3-tri-(9Z-octadecenoyl)-glycerol + H2O = di-(9Z)-octadecenoylglycerol + (9Z)-octadecenoate + H(+). The enzyme catalyses 1-hexadecanoyl-2-(9Z)-octadecenoyl-3-octadecanoyl-sn-glycerol + H2O = 1-hexadecanoyl-2-(9Z-octadecenoyl)-sn-glycerol + octadecanoate + H(+). It catalyses the reaction 1,3-dihexadecanoyl-2-(9Z-octadecenoyl)glycerol + H2O = 1,3-dihexadecanoylglycerol + (9Z)-octadecenoate + H(+). It carries out the reaction 1,3-dihexadecanoyl-2-(9Z-octadecenoyl)glycerol + H2O = 1-hexadecanoyl-2-(9Z-octadecenoyl)-glycerol + hexadecanoate + H(+). The catalysed reaction is 1-hexadecanoyl-2-(9Z)-octadecenoyl-3-octadecanoyl-sn-glycerol + H2O = 1-hexadecanoyl-3-octadecanoyl-sn-glycerol + (9Z)-octadecenoate + H(+). The enzyme catalyses 1-hexadecanoyl-2-(9Z)-octadecenoyl-3-octadecanoyl-sn-glycerol + H2O = 2-(9Z-octadecenoyl)-3-octadecanoyl-sn-glycerol + hexadecanoate + H(+). It catalyses the reaction 1-octadecanoyl-2-(9Z,12Z)-octadecadienoyl-sn-glycerol + H2O = 1-octadecanoyl-sn-glycerol + (9Z,12Z)-octadecadienoate + H(+). It carries out the reaction 1,2-di-(9Z-octadecenoyl)-sn-glycerol + H2O = 1-(9Z-octadecenoyl)-sn-glycerol + (9Z)-octadecenoate + H(+). The catalysed reaction is 2,3-di-(9Z)-octadecenoyl-sn-glycerol + H2O = 3-(9Z-octadecenoyl)-sn-glycerol + (9Z)-octadecenoate + H(+). The enzyme catalyses 1,3-di-(9Z-octadecenoyl)-glycerol + H2O = 1-(9Z-octadecenoyl)-glycerol + (9Z)-octadecenoate + H(+). It catalyses the reaction 1-(9Z-octadecenoyl)-glycerol + H2O = glycerol + (9Z)-octadecenoate + H(+). It carries out the reaction 2-(9Z-octadecenoyl)-glycerol + H2O = glycerol + (9Z)-octadecenoate + H(+). Up-regulated by bile acids such as deoxycholate. Inhibited by diisopropyl fluorophosphate. Its function is as follows. Calcium-independent membrane-associated phospholipase that catalyzes complete diacylation of phospholipids by hydrolyzing both sn-1 and sn-2 fatty acyl chains attached to the glycerol backbone (phospholipase B activity). Has dual phospholipase and lysophospholipase activities toward diacylphospholipids. Preferentially cleaves sn-2 ester bonds over sn-1 bonds. Acts as a lipase toward glycerolipid substrates. Hydrolyzes fatty acyl chains of diacylglycerols with preference for the sn-2 position and of triacylglycerols with not positional selectivity. May also hydrolyze long chain retinyl esters such as retinyl palmitate. May contribute to digestion of dietary phospholipids, glycerolipids and retinoids, facilitating lipid absorption at the brush border. The chain is Phospholipase B1, membrane-associated (Plb1) from Rattus norvegicus (Rat).